The primary structure comprises 64 residues: DNA gyrase inhibitor YacG (64 aa).

The Zn(2+) site is built by C7, C10, C26, and C30. The segment at 43 to 64 (KRIPGPINPDLLPYPDEGEQWQ) is disordered.

Belongs to the DNA gyrase inhibitor YacG family. Interacts with GyrB. Zn(2+) is required as a cofactor.

Inhibits all the catalytic activities of DNA gyrase by preventing its interaction with DNA. Acts by binding directly to the C-terminal domain of GyrB, which probably disrupts DNA binding by the gyrase. The chain is DNA gyrase inhibitor YacG from Aeromonas salmonicida (strain A449).